A 602-amino-acid chain; its full sequence is Elongation factor 4 (602 aa).

In terms of domain architecture, tr-type G spans 7-189 (SQIRNFSIIA…AIVHRIPPPA (183 aa)). Residues 19–24 (DHGKST) and 136–139 (NKID) each bind GTP.

This sequence belongs to the TRAFAC class translation factor GTPase superfamily. Classic translation factor GTPase family. LepA subfamily.

Its subcellular location is the cell inner membrane. The catalysed reaction is GTP + H2O = GDP + phosphate + H(+). Its function is as follows. Required for accurate and efficient protein synthesis under certain stress conditions. May act as a fidelity factor of the translation reaction, by catalyzing a one-codon backward translocation of tRNAs on improperly translocated ribosomes. Back-translocation proceeds from a post-translocation (POST) complex to a pre-translocation (PRE) complex, thus giving elongation factor G a second chance to translocate the tRNAs correctly. Binds to ribosomes in a GTP-dependent manner. This is Elongation factor 4 from Gloeobacter violaceus (strain ATCC 29082 / PCC 7421).